Here is a 190-residue protein sequence, read N- to C-terminus: Threonylcarbamoyl-AMP synthase (190 aa).

Residues 7-190 enclose the YrdC-like domain; it reads SQDVASLVIA…ALSGELIRQG (184 aa).

The protein belongs to the SUA5 family. TsaC subfamily.

It localises to the cytoplasm. It catalyses the reaction L-threonine + hydrogencarbonate + ATP = L-threonylcarbamoyladenylate + diphosphate + H2O. Functionally, required for the formation of a threonylcarbamoyl group on adenosine at position 37 (t(6)A37) in tRNAs that read codons beginning with adenine. Catalyzes the conversion of L-threonine, HCO(3)(-)/CO(2) and ATP to give threonylcarbamoyl-AMP (TC-AMP) as the acyladenylate intermediate, with the release of diphosphate. This is Threonylcarbamoyl-AMP synthase from Sodalis glossinidius (strain morsitans).